The sequence spans 709 residues: MATCADILRSEFPEIDGQVFDYVTGVLHSGSADFESVDDLVEAVGELLQEVSGDSKDDAGIRAVCQRMYNTLRLAEPQNQGNSQVLLDAPIQLSKIMENYDCDTKLPGLLKREQSSTVNAKKLEKAEARLKAKQEKRSEKETLKTSNPLVLEEASASQAGSRKESRLESSGKNKSYDVRIENFDVSFGDRVLLAGADVNLAWGRRYGLVGRNGLGKTTLLKMLATRSLRVPAHISLLHVEQEVAGDDTPALQSVLESDTVREDLLRQERELSLRIAAGRAEGSEAAQLAEIYGKLEEIEADKAPARASVILAGLGFTPKMQQQPTREFSGGWRMRLALARALFARPDLLLLDEPTNMLDVRAILWLENYLQTWPSTILVVSHDRNFLNAIATDIIHLHSQRLDGYRGDFETFIKSKQERLLNQQREYEAQQQYRQHIQVFIDRFRYNANRASQVQSKLKMLEKLPELKPVDKESEVVLKFPDGFEKFSPPILQLDEVDFYYDPKHSIFSRLSVSADLESRICVVGENGAGKSTMLKLLMGDLSPVRGIRHAHRNLKIGYFSQHHVEQLDLNVSAVELLARKFPGLPEEEYRHQLGRYGISGELAMRPVASLSGGQKSRVAFAQMTMPCPNFYILDEPTNHLDMETIEALGQALNNFRGGVILVSHDERFIRLVCKELWVCENGSVTRVEGGFDQYRALLQEQFRREGFL.

Ala-2 carries the N-acetylalanine modification. Residue Ser-83 is modified to Phosphoserine. Positions 129–143 are enriched in basic and acidic residues; the sequence is RLKAKQEKRSEKETL. Positions 129-171 are disordered; that stretch reads RLKAKQEKRSEKETLKTSNPLVLEEASASQAGSRKESRLESSG. Residues Ser-155, Ser-157, and Ser-161 each carry the phosphoserine modification. Residues 161–171 show a composition bias toward basic and acidic residues; sequence SRKESRLESSG. ABC transporter domains are found at residues 178–424 and 492–707; these read VRIE…LNQQ and LQLD…RREG. Position 210-217 (210-217) interacts with ATP; that stretch reads GRNGLGKT. A Phosphoserine modification is found at Ser-283. 525-532 contacts ATP; sequence GENGAGKS.

It belongs to the ABC transporter superfamily. ABCF family. EF3 subfamily.

In terms of biological role, displays an antiviral effect against flaviviruses such as west Nile virus (WNV) in the presence of OAS1B. The protein is ATP-binding cassette sub-family F member 3 (Abcf3) of Mus musculus (Mouse).